Here is a 590-residue protein sequence, read N- to C-terminus: L-erythrulose kinase (590 aa).

Residues 7–331 (QPSSFARELT…WRAPADAPAF (325 aa)) enclose the DhaK domain. The Tele-hemiaminal-histidine intermediate role is filled by His217. A DhaL domain is found at 366 to 568 (HCVAAALNAA…LAMILDAVSA (203 aa)). ADP contacts are provided by residues 398–401 (HGIG), 441–442 (TS), Gly483, Arg540, and 553–555 (DAG).

The enzyme catalyses L-erythrulose + ATP = L-erythrulose 1-phosphate + ADP + H(+). It functions in the pathway carbohydrate metabolism. Involved in catabolism of D-apiose. Catalyzes the phosphorylation of L-erythrulose to L-erythrulose 1-phosphate. Can also phosphorylate D-erythrulose and dihydroxyacetone in vitro. The polypeptide is L-erythrulose kinase (Pectobacterium atrosepticum (strain SCRI 1043 / ATCC BAA-672) (Erwinia carotovora subsp. atroseptica)).